Consider the following 1142-residue polypeptide: Melanoma-associated antigen C1 (1142 aa).

The tract at residues 1 to 132 (MGDKDMPTAG…DVQSPLQNPA (132 aa)) is disordered. A compositionally biased stretch (low complexity) spans 13–42 (SLLQSSSESPQSCPEGEDSQSPLQIPQSSP). Phosphoserine is present on S63. Positions 76–87 (SQSPLQIPQSSP) are enriched in low complexity. The span at 92–103 (TQSPLQNSQSSP) shows a compositional bias: polar residues. S207 and S382 each carry phosphoserine. Disordered stretches follow at residues 502 to 778 (TQST…LQRP) and 791 to 893 (LQSS…SLTD). Residues 614 to 626 (SPLQGEEFQSSLQ) are compositionally biased toward polar residues. The span at 627-659 (SPVSICSSSTPSSLPQSFPESSQSPPEGPVQSP) shows a compositional bias: low complexity. Residues 671–680 (HSQSPLQSPE) show a composition bias toward polar residues. Low complexity-rich tracts occupy residues 741–762 (QSPV…FPES) and 807–889 (QSPL…LESD). An MAGE domain is found at 908-1106 (LDEKVDELAR…ITFPSSYKDA (199 aa)). At S1063 the chain carries Phosphoserine. The segment at 1118–1142 (IDTTDDSTATESASSSVMSPSFSSE) is disordered. The segment covering 1123–1142 (DSTATESASSSVMSPSFSSE) has biased composition (low complexity).

As to expression, expressed in testis and in tumors of a wide variety of histologic types.

Its subcellular location is the cytoplasm. The sequence is that of Melanoma-associated antigen C1 (MAGEC1) from Homo sapiens (Human).